A 400-amino-acid chain; its full sequence is ATP-dependent RNA helicase fal-1 (400 aa).

Positions 26-54 (PTFESMSLKESLLRGIYAYGYESPSAVQS) match the Q motif motif. The region spanning 57–227 (IVQICKGRDT…TKFMTDPVRI (171 aa)) is the Helicase ATP-binding domain. 70–77 (AQSGTGKT) serves as a coordination point for ATP. Positions 175 to 178 (DEAD) match the DEAD box motif. The Helicase C-terminal domain occupies 238-399 (GLKQYFIAVE…EMPMNVADLI (162 aa)).

This sequence belongs to the DEAD box helicase family. DDX48/FAL1 subfamily.

The protein localises to the nucleus. It is found in the nucleolus. The enzyme catalyses ATP + H2O = ADP + phosphate + H(+). ATP-dependent RNA helicase involved in 40S ribosomal subunit biogenesis. Required for the processing and cleavage of 35S pre-rRNA at sites A0, A1, and A2, leading to mature 18S rRNA. This chain is ATP-dependent RNA helicase fal-1 (fal-1), found in Neurospora crassa (strain ATCC 24698 / 74-OR23-1A / CBS 708.71 / DSM 1257 / FGSC 987).